An 83-amino-acid polypeptide reads, in one-letter code: Prolactin-releasing peptide (83 aa).

The first 21 residues, 1–21 (MALKTWLLCLLLLSLVLPGAS), serve as a signal peptide directing secretion. Phenylalanine 52 bears the Phenylalanine amide mark. Residues 57 to 83 (ATPRDVTGLGQLSCLPLDGRTKFSQRG) constitute a propeptide that is removed on maturation.

Widely expressed, with highest levels in medulla oblongata and hypothalamus.

Its subcellular location is the secreted. Its function is as follows. Stimulates prolactin (PRL) release and regulates the expression of prolactin through its receptor GPR10. May stimulate lactotrophs directly to secrete PRL. In Rattus norvegicus (Rat), this protein is Prolactin-releasing peptide (Prlh).